Consider the following 427-residue polypeptide: Glutamate-1-semialdehyde 2,1-aminomutase 1 (427 aa).

Lys267 is subject to N6-(pyridoxal phosphate)lysine.

It belongs to the class-III pyridoxal-phosphate-dependent aminotransferase family. HemL subfamily. In terms of assembly, homodimer. Pyridoxal 5'-phosphate serves as cofactor.

It localises to the cytoplasm. The enzyme catalyses (S)-4-amino-5-oxopentanoate = 5-aminolevulinate. The protein operates within porphyrin-containing compound metabolism; protoporphyrin-IX biosynthesis; 5-aminolevulinate from L-glutamyl-tRNA(Glu): step 2/2. This chain is Glutamate-1-semialdehyde 2,1-aminomutase 1, found in Macrococcus caseolyticus (strain JCSC5402) (Macrococcoides caseolyticum).